The primary structure comprises 166 residues: Probable histone deacetylase complex subunit SAP18 (166 aa).

The segment at 143–166 (GRRFNNREQGDRFDHRQRQRSPIR) is disordered. Residues 147 to 158 (NNREQGDRFDHR) are compositionally biased toward basic and acidic residues.

This sequence belongs to the SAP18 family. In terms of assembly, interacts with SIN3 and histone deacetylase.

Acts in transcription repression. Involved in the tethering of the SIN3 complex to core histone proteins. This chain is Probable histone deacetylase complex subunit SAP18, found in Caenorhabditis elegans.